The following is a 196-amino-acid chain: Potassium-transporting ATPase KdpC subunit (196 aa).

Residues 7 to 27 traverse the membrane as a helical segment; that stretch reads PAIVSAGLFTVLLGLAYPLAV.

The protein belongs to the KdpC family. In terms of assembly, the system is composed of three essential subunits: KdpA, KdpB and KdpC.

The protein resides in the cell inner membrane. In terms of biological role, part of the high-affinity ATP-driven potassium transport (or Kdp) system, which catalyzes the hydrolysis of ATP coupled with the electrogenic transport of potassium into the cytoplasm. This subunit acts as a catalytic chaperone that increases the ATP-binding affinity of the ATP-hydrolyzing subunit KdpB by the formation of a transient KdpB/KdpC/ATP ternary complex. This chain is Potassium-transporting ATPase KdpC subunit, found in Caulobacter sp. (strain K31).